Reading from the N-terminus, the 290-residue chain is Protein CREG2 (290 aa).

The first 31 residues, 1 to 31 (MSVRRGRRPARPGTRLSWLLCCSALLSPAAG), serve as a signal peptide directing secretion. N165 and N166 each carry an N-linked (GlcNAc...) asparagine glycan.

This sequence belongs to the CREG family. In terms of processing, it is not sure whether N-glycosylation is on Asn-165 and/or Asn-166. As to expression, brain specific mainly in the limbic system and faintly in the spinal cord but not in cerebellum.

It localises to the secreted. The sequence is that of Protein CREG2 (CREG2) from Homo sapiens (Human).